The primary structure comprises 708 residues: MPRNLRFLSVVNHVTKQVPTTCMRCAVGCGHVHLGSENAYGLETVRGDPSHPVNNGLACGRGIRESADPAGEWLTRPLVREDGELVQTSWSDAMARVGATIRTAVATDPDEVAVLGSGQQTNEAAYALGKLARAGIGTRNYDANTTLCMASAVTAYYRAFGSDAPPPTYDDIPNAETHLVWGANPAVAHPVMFRWIRQSATDGRLVVVDPVETKTAAVADDHVSVAPGGDLALARAILRHLVDTDQIDESFVRSNTEGFDDVVSALPSVTDAAARAGVSLDTVEELAALLDAPTLIYWGMGVNQSVRGTATAGALVNLCLASGNLGPGTGPFSLTGQANSMGTRVCSSKGTWSGHRPFEHPDHRRAVAEAWDVPVSRLPDDSGPGPVGILDSSPSVVWTVATNPLAGFPDATAAREVLRDSFLVVQDAFRSDTVELADVVLPAATWGESEGTAMNMERTVSRIRAATETPPGVRQDLDIIADVAARVAPGLLPRPPVSPSAIFDEFAALTEGTDADCSGISYTRLDGERAVRWPAPEPNSDAGYRYYDPSTSRWTFPTPSGKARFSTLDGEPLPEPVDGDYPLTLTTGREADGYNTGVRSRSDTPEEPVARVNPETVDTYHDAVADTDGELRTTVVSRRASVSVTLDRDDAVPPGLVWLSIHHPMTNQLTSPAVDPQSNEPNFKQCAVRFVHPDAPAKADFLAAEVSD.

Residues 15–73 (TKQVPTTCMRCAVGCGHVHLGSENAYGLETVRGDPSHPVNNGLACGRGIRESADPAGEW) form the 4Fe-4S Mo/W bis-MGD-type domain. Positions 22, 25, 29, and 59 each coordinate [4Fe-4S] cluster. The segment at 586–613 (TTGREADGYNTGVRSRSDTPEEPVARVN) is disordered.

This sequence belongs to the prokaryotic molybdopterin-containing oxidoreductase family. NasA/NapA/NarB subfamily. As to quaternary structure, is probably a monomer. Initially characterized as a dimer of proteins with a MW of 105 and 50 kDa. It depends on [4Fe-4S] cluster as a cofactor. Mo-bis(molybdopterin guanine dinucleotide) is required as a cofactor.

The protein resides in the cytoplasm. It catalyses the reaction nitrite + 2 oxidized [2Fe-2S]-[ferredoxin] + H2O = nitrate + 2 reduced [2Fe-2S]-[ferredoxin] + 2 H(+). It functions in the pathway nitrogen metabolism; nitrate reduction (assimilation). With respect to regulation, inhibited by cyanide and azide. In terms of biological role, nitrate reductase is a key enzyme involved in the first step of nitrate assimilation. Catalyzes the reduction of nitrate to nitrite, using ferredoxin as the electron donor. Can use reduced methyl viologen but neither NADPH nor NADH as electron donors. The protein is Assimilatory nitrate reductase of Haloferax mediterranei (strain ATCC 33500 / DSM 1411 / JCM 8866 / NBRC 14739 / NCIMB 2177 / R-4) (Halobacterium mediterranei).